A 1183-amino-acid chain; its full sequence is 3-hydroxy-3-methylglutaryl-coenzyme A reductase (1183 aa).

The Cytoplasmic segment spans residues 1-245 (MAAILLPQRF…DLLKNAETLD (245 aa)). An SSD domain is found at 245-426 (DIVIMLLGYI…FTFYTAILSI (182 aa)). The chain crosses the membrane as a helical span at residues 246–266 (IVIMLLGYIAMHLTFVSLFLS). Over 267–273 (MRKMGSK) the chain is Lumenal. Residues 274-294 (FWLGICTLFSSVFAFLFGLVV) form a helical membrane-spanning segment. Residues 295-299 (TTKLG) are Cytoplasmic-facing. Residues 300 to 320 (VPISVILLSEGLPFLVVTIGF) traverse the membrane as a helical segment. Topologically, residues 321-378 (EKNIVLTRAVMSHAIEHRRIQAQNSKSGKRSPERSTQNMIQYAVQAAIKEKGFEIIRD) are lumenal. Residues 379-399 (YAIEIVILVIGAASGVQGGLQ) traverse the membrane as a helical segment. Over 400–402 (QFC) the chain is Cytoplasmic. Residues 403 to 423 (FLAAWTLFFDFILLFTFYTAI) form a helical membrane-spanning segment. Residues 424-482 (LSIKLEINRIKRHVDMRMALEDDGVSRRVAENVAKGDDELNRVRGDAPLFGRKSSSIPK) lie on the Lumenal side of the membrane. A helical membrane pass occupies residues 483-503 (FKVLMILGFIFVNIVNICSIP). Topologically, residues 504–1183 (FRNPSSMSTI…SAAAIQRSKR (680 aa)) are cytoplasmic. The active-site Charge relay system is the glutamate 828. CoA is bound at residue 834–840 (SASRGCK). NADP(+) contacts are provided by residues 895–897 (SRF) and 922–930 (DAMGMNMIS). Residue lysine 962 is the Charge relay system of the active site. Residue 991–993 (VLK) participates in CoA binding. Residue aspartate 1038 is the Charge relay system of the active site. 1133-1134 (AH) contributes to the CoA binding site. Residue histidine 1134 is the Proton donor of the active site. A disordered region spans residues 1136-1183 (QHNRSAAPSRSTTPAPPMTPVSLAMTSAQERSASTTSMSAAAIQRSKR). An NADP(+)-binding site is contributed by 1138–1139 (NR). Composition is skewed to low complexity over residues 1139–1148 (RSAAPSRSTT) and 1167–1177 (SASTTSMSAAA).

The protein belongs to the HMG-CoA reductase family.

The protein localises to the endoplasmic reticulum membrane. It catalyses the reaction (R)-mevalonate + 2 NADP(+) + CoA = (3S)-3-hydroxy-3-methylglutaryl-CoA + 2 NADPH + 2 H(+). The protein operates within metabolic intermediate biosynthesis; (R)-mevalonate biosynthesis; (R)-mevalonate from acetyl-CoA: step 3/3. Functionally, HMG-CoA reductase; part of the first module of ergosterol biosynthesis pathway that includes the early steps of the pathway, conserved across all eukaryotes, and which results in the formation of mevalonate from acetyl-coenzyme A (acetyl-CoA). In this module, the cytosolic acetyl-CoA acetyltransferase catalyzes the formation of acetoacetyl-CoA. The hydroxymethylglutaryl-CoA synthase then condenses acetyl-CoA with acetoacetyl-CoA to form HMG-CoA. The rate-limiting step of the early module is the reduction to mevalonate by the 3-hydroxy-3-methylglutaryl-coenzyme A (HMG-CoA) reductase HMGR. In Gibberella fujikuroi (strain CBS 195.34 / IMI 58289 / NRRL A-6831) (Bakanae and foot rot disease fungus), this protein is 3-hydroxy-3-methylglutaryl-coenzyme A reductase (HMGR).